The chain runs to 548 residues: uncharacterized protein (548 aa).

An N-terminal signal peptide occupies residues 1-24 (MKKATKLLLSILPISSISFLSVVS). Residue cysteine 25 is the site of N-palmitoyl cysteine attachment. Residue cysteine 25 is the site of S-diacylglycerol cysteine attachment. A disordered region spans residues 26-129 (STRNSNAKQP…NNQHADQPNI (104 aa)). Residues 34-44 (QPDKKPEKPNE) are compositionally biased toward basic and acidic residues. A compositionally biased stretch (low complexity) spans 58 to 78 (PTNNNNNSNNNSNSNNNKPGS). Residues 83 to 109 (ENKDPSKSEETPEKPERDPKKPDKQPQ) are compositionally biased toward basic and acidic residues. Over residues 110 to 128 (GDDPNNHQPHNNQHADQPN) the composition is skewed to low complexity.

The protein belongs to the mycoplasma p72 lipoprotein family.

Its subcellular location is the cell membrane. This is an uncharacterized protein from Mycoplasma mycoides subsp. mycoides SC (strain CCUG 32753 / NCTC 10114 / PG1).